Here is a 258-residue protein sequence, read N- to C-terminus: UPF0246 protein YaaA (258 aa).

This sequence belongs to the UPF0246 family.

The protein is UPF0246 protein YaaA of Escherichia coli O8 (strain IAI1).